Consider the following 393-residue polypeptide: DNA primase small subunit PriS (393 aa).

Catalysis depends on residues Asp100, Asp102, and Asp296.

It belongs to the eukaryotic-type primase small subunit family. Heterodimer of a small subunit (PriS) and a large subunit (PriL). The cofactor is Mg(2+). It depends on Mn(2+) as a cofactor.

In terms of biological role, catalytic subunit of DNA primase, an RNA polymerase that catalyzes the synthesis of short RNA molecules used as primers for DNA polymerase during DNA replication. The small subunit contains the primase catalytic core and has DNA synthesis activity on its own. Binding to the large subunit stabilizes and modulates the activity, increasing the rate of DNA synthesis while decreasing the length of the DNA fragments, and conferring RNA synthesis capability. The DNA polymerase activity may enable DNA primase to also catalyze primer extension after primer synthesis. May also play a role in DNA repair. The chain is DNA primase small subunit PriS from Natronomonas pharaonis (strain ATCC 35678 / DSM 2160 / CIP 103997 / JCM 8858 / NBRC 14720 / NCIMB 2260 / Gabara) (Halobacterium pharaonis).